The chain runs to 773 residues: 4'-phosphopantetheine phosphatase (773 aa).

At Ala2 the chain carries N-acetylalanine. A pantothenate kinase region spans residues 2-402 (AECRASGGGS…APELCPTQRA (401 aa)). Residues Ser196 and Ser199 each coordinate acetyl-CoA. At Tyr320 the chain carries 3'-nitrotyrosine. Positions 403–773 (RSGTFDLLEM…VIFKYEVPAE (371 aa)) are 4'-phosphopantetheine phosphatase. The residue at position 404 (Ser404) is a Phosphoserine. Thr406 carries the post-translational modification Phosphothreonine. Residues Asp623, Asn624, and Asp659 each coordinate Mn(2+). Residues 724–728 (EGMGR) carry the Subfamily II EGMGR motif motif.

The protein in the N-terminal section; belongs to the type II pantothenate kinase family. In the C-terminal section; belongs to the damage-control phosphatase family. Phosphopantetheine phosphatase (II) subfamily. In terms of assembly, homodimer. Interacts with PKM. Requires Mn(2+) as cofactor. Ni(2+) serves as cofactor.

It localises to the cytoplasm. It catalyses the reaction (R)-4'-phosphopantetheine + H2O = (R)-pantetheine + phosphate. The catalysed reaction is (R)-4'-phosphopantetheine sulfonate + H2O = (R)-pantetheine sulfonate + phosphate. The enzyme catalyses (R)-4'-phospho-S-sulfopantetheine + H2O = (R)-S-sulfopantetheine + phosphate. Activity is strongly promoted by Co(2+), Ni(2+), Mg(2+) and Mn(2+). Activity is inhibited by EDTA. Functionally, phosphatase which shows a preference for 4'-phosphopantetheine and its oxidatively damaged forms (sulfonate or S-sulfonate), providing strong indirect evidence that the phosphatase activity pre-empts damage in the coenzyme A (CoA) pathway. Hydrolyzing excess 4'-phosphopantetheine could constitute a directed overflow mechanism to prevent its oxidation to the S-sulfonate, sulfonate, or other forms. Hydrolyzing 4'-phosphopantetheine sulfonate or S-sulfonate would forestall their conversion to inactive forms of CoA and acyl carrier protein. May play a role in the physiological regulation of CoA intracellular levels. This chain is 4'-phosphopantetheine phosphatase, found in Rattus norvegicus (Rat).